We begin with the raw amino-acid sequence, 1247 residues long: Probable phosphorylase b kinase regulatory subunit alpha (1247 aa).

Positions 853–883 (LKGLYEKACQQKLWGLVRHTAGMLGKRVEDL) are calmodulin-binding. Phosphoserine occurs at positions 1030 and 1033. The interval 1052-1089 (DRQGQWLRRRRLDGALNRVPRDFYSRVWTVLEKCQGLA) is calmodulin-binding. Residue Cys1244 is the site of S-farnesyl cysteine attachment.

The protein belongs to the phosphorylase b kinase regulatory chain family. In terms of processing, although the final Cys may be farnesylated, the terminal tripeptide is probably not removed, and the C-terminus is not methylated.

It is found in the cell membrane. It functions in the pathway glycan biosynthesis; glycogen metabolism. Functionally, phosphorylase b kinase catalyzes the phosphorylation of serine in certain substrates, including troponin I. The alpha chain may bind calmodulin. The chain is Probable phosphorylase b kinase regulatory subunit alpha from Drosophila melanogaster (Fruit fly).